The following is a 224-amino-acid chain: Deoxyguanosine kinase (224 aa).

An ATP-binding site is contributed by 8-16 (GPIGAGKSS). Substrate contacts are provided by Glu32, Tyr44, and Gln55. The active-site Proton acceptor is Asp78. Substrate-binding residues include Arg79, Asp84, and Glu149.

Belongs to the DCK/DGK family. As to quaternary structure, heterodimer of a deoxyadenosine (DAK) and a deoxyguanosine kinase (DGK).

It carries out the reaction 2'-deoxyguanosine + ATP = dGMP + ADP + H(+). DGK/DAK plays an essential role in generating the deoxyribonucleotide precursors, dGTP and dATP, for DNA metabolism. This chain is Deoxyguanosine kinase, found in Lactobacillus johnsonii (strain CNCM I-12250 / La1 / NCC 533).